Consider the following 608-residue polypeptide: Dolichyl-diphosphooligosaccharide--protein glycosyltransferase subunit 1 (608 aa).

The signal sequence occupies residues 1–25; sequence MESPVALLLLLLLCLGALAPTPGSA. The Lumenal portion of the chain corresponds to 26–440; sequence SSEAPPLVNE…FNKVLMLQEP (415 aa). An N6-acetyllysine modification is found at lysine 188. A glycan (N-linked (GlcNAc...) asparagine) is linked at asparagine 300. Residues 441–458 form a helical membrane-spanning segment; sequence LLVVAAFYILFFTVIIYV. The Cytoplasmic segment spans residues 459 to 608; that stretch reads RLDFSITKDP…TKIDHILDAL (150 aa). Residue lysine 539 is modified to N6-acetyllysine; alternate. Residue lysine 539 forms a Glycyl lysine isopeptide (Lys-Gly) (interchain with G-Cter in SUMO2); alternate linkage.

The protein belongs to the OST1 family. In terms of assembly, component of the oligosaccharyltransferase (OST) complex. OST exists in two different complex forms which contain common core subunits RPN1, RPN2, OST48, OST4, DAD1 and TMEM258, either STT3A or STT3B as catalytic subunits, and form-specific accessory subunits. STT3A complex assembly occurs through the formation of 3 subcomplexes. Subcomplex 1 contains RPN1 and TMEM258, subcomplex 2 contains the STT3A-specific subunits STT3A, DC2/OSTC, and KCP2 as well as the core subunit OST4, and subcomplex 3 contains RPN2, DAD1, and OST48. The STT3A complex can form stable complexes with the Sec61 complex or with both the Sec61 and TRAP complexes. Interacts with TMEM35A/NACHO. Ubiquitinated by the ECS(ASB11) complex. Ubiquitinated by RNF128, leading to degradation in a proteasome/lysosome-dependent manner. Post-translationally, ufmylated by UFL1 in response to endoplasmic reticulum stress, promoting reticulophagy of endoplasmic reticulum sheets.

The protein resides in the endoplasmic reticulum membrane. Its pathway is protein modification; protein glycosylation. Its function is as follows. Subunit of the oligosaccharyl transferase (OST) complex that catalyzes the initial transfer of a defined glycan (Glc(3)Man(9)GlcNAc(2) in eukaryotes) from the lipid carrier dolichol-pyrophosphate to an asparagine residue within an Asn-X-Ser/Thr consensus motif in nascent polypeptide chains, the first step in protein N-glycosylation. N-glycosylation occurs cotranslationally and the complex associates with the Sec61 complex at the channel-forming translocon complex that mediates protein translocation across the endoplasmic reticulum (ER). All subunits are required for a maximal enzyme activity. This chain is Dolichyl-diphosphooligosaccharide--protein glycosyltransferase subunit 1, found in Mus musculus (Mouse).